The sequence spans 722 residues: Pre-B-cell leukemia transcription factor-interacting protein 1 (722 aa).

The segment covering 1 to 10 (MASCPDSDNS) has biased composition (polar residues). Positions 1 to 180 (MASCPDSDNS…TAAVDGEDQA (180 aa)) are disordered. Residues 88-97 (DDGHGTKRPG) are compositionally biased toward basic and acidic residues. Ser-133, Ser-144, Ser-145, and Ser-146 each carry phosphoserine. Thr-150 bears the Phosphothreonine mark. Ser-166 is subject to Phosphoserine. Coiled coils occupy residues 266–346 (LLLD…RGVD) and 373–401 (DTSLLEQHKQLEAEAKALRQELQKQWQLL). Positions 442-453 (QGINTGRSSNDS) are enriched in polar residues. Disordered stretches follow at residues 442–562 (QGIN…SPDS) and 691–722 (RRSKKKEKQPWNHRAVGPREEHSRHPHHYHQG). Basic and acidic residues-rich tracts occupy residues 465–536 (HPRE…DPKV) and 546–559 (SGERQKHSWGKDNS). Residues 482–502 (QKAEHWKLKKEESGQDRKKSW) carry the Nuclear localization signal motif. Ser-559 bears the Phosphoserine mark. The Nuclear localization signal motif lies at 686-711 (DKALKRRSKKKEKQPWNHRAVGPREE).

As to quaternary structure, interacts with ESR1, PBX1, PBX2 and PBX3. Interacts with TEX11.

It is found in the cytoplasm. It localises to the cytoskeleton. Its subcellular location is the nucleus. Regulator of pre-B-cell leukemia transcription factors (BPXs) function. Inhibits the binding of PBX1-HOX complex to DNA and blocks the transcriptional activity of E2A-PBX1. Tethers estrogen receptor-alpha (ESR1) to microtubules and allows them to influence estrogen receptors-alpha signaling. This chain is Pre-B-cell leukemia transcription factor-interacting protein 1 (Pbxip1), found in Rattus norvegicus (Rat).